A 1073-amino-acid polypeptide reads, in one-letter code: Serine/threonine-protein kinase 11-interacting protein (1073 aa).

LRR repeat units lie at residues 166–187, 189–210, 212–233, 236–257, 258–279, and 283–304; these read ELQTVNFSYNSITALDDSLQLL, ALRVLDLSHNKVQDCEHYLTTL, ELEYLNLAYNFLSKVPNLGIFS, KLLTLILRNNELDSINGVEQLV, NLQHLDVAYNLLLEHAQLAPLS, and YLKKLHLEGNPLWFHQNHRSAT. 4 disordered regions span residues 389-409, 455-533, 724-817, and 834-859; these read VKVRRASISEPSDTEHESQAL, SRSA…EKPE, EVSS…QGMK, and MGSYRYSASRGPTSSQLSMTSDSEET. The span at 515 to 532 shows a compositional bias: acidic residues; that stretch reads REEEADELMLGEEEDEKP. Composition is skewed to polar residues over residues 779 to 788 and 843 to 859; these read MDTSNSTRTP and RGPTSSQLSMTSDSEET.

This sequence belongs to the STK11IP family.

It localises to the cytoplasm. In Gallus gallus (Chicken), this protein is Serine/threonine-protein kinase 11-interacting protein (STK11IP).